The chain runs to 181 residues: Inner membrane-spanning protein YciB (181 aa).

The next 5 membrane-spanning stretches (helical) occupy residues 10 to 30, 50 to 70, 72 to 92, 118 to 138, and 148 to 168; these read LIIF…GALI, MHLI…VFHD, AFIK…LGVS, VTWY…YVAF, and FKVF…VFYL.

The protein belongs to the YciB family.

The protein localises to the cell inner membrane. In terms of biological role, plays a role in cell envelope biogenesis, maintenance of cell envelope integrity and membrane homeostasis. The polypeptide is Inner membrane-spanning protein YciB (Shewanella sp. (strain MR-4)).